The following is a 157-amino-acid chain: Large ribosomal subunit protein uL22 (157 aa).

Belongs to the universal ribosomal protein uL22 family. Part of the 50S ribosomal subunit.

This protein binds specifically to 23S rRNA. It makes multiple contacts with different domains of the 23S rRNA in the assembled 50S subunit and ribosome. In terms of biological role, the globular domain of the protein is located near the polypeptide exit tunnel on the outside of the subunit, while an extended beta-hairpin is found that lines the wall of the exit tunnel in the center of the 70S ribosome. The sequence is that of Large ribosomal subunit protein uL22 from Methanocorpusculum labreanum (strain ATCC 43576 / DSM 4855 / Z).